The primary structure comprises 430 residues: Purine nucleoside phosphorylase LACC1 (430 aa).

K247 carries the post-translational modification N6-acetyllysine. Residues H250, C284, and H301 each coordinate Zn(2+).

It belongs to the purine nucleoside phosphorylase YfiH/LACC1 family. Interacts with FASN. Interacts with SDHA. Interacts with ATF6, EIF2AK3 and ERN1. Phosphorylated on tyrosine residues. In terms of tissue distribution, predominantly expressed in myeloid cells. Highly expressed in primary macrophages and dendritic cells sorted from the peritoneum or spleen, respectively (at protein level).

It is found in the cytoplasm. It localises to the nucleus. Its subcellular location is the endoplasmic reticulum. The protein resides in the peroxisome. It carries out the reaction adenosine + phosphate = alpha-D-ribose 1-phosphate + adenine. The catalysed reaction is inosine + phosphate = alpha-D-ribose 1-phosphate + hypoxanthine. The enzyme catalyses guanosine + phosphate = alpha-D-ribose 1-phosphate + guanine. It catalyses the reaction S-methyl-5'-thioadenosine + phosphate = 5-(methylsulfanyl)-alpha-D-ribose 1-phosphate + adenine. It carries out the reaction adenosine + H2O + H(+) = inosine + NH4(+). In terms of biological role, purine nucleoside enzyme that catalyzes the phosphorolysis of adenosine, guanosine and inosine nucleosides, yielding D-ribose 1-phosphate and the respective free bases, adenine, guanine and hypoxanthine. Also catalyzes the phosphorolysis of S-methyl-5'-thioadenosine into adenine and S-methyl-5-thio-alpha-D-ribose 1-phosphate. Also has adenosine deaminase activity. Acts as a regulator of innate immunity in macrophages by modulating the purine nucleotide metabolism, thereby regulating the metabolic function and bioenergetic state of macrophages. Enables a purine nucleotide cycle between adenosine and inosine monophosphate and adenylosuccinate that prevents cytoplasmic acidification and balances the cytoplasmic-mitochondrial redox interface. The purine nucleotide cycle consumes aspartate and releases fumarate in a manner involving fatty acid oxidation and ATP-citrate lyase activity. Participates in pattern recognition receptor-induced cytokines in macrophages: associates with the NOD2-signaling complex and promotes optimal NOD2-induced signaling, cytokine secretion and bacterial clearance. Localizes to the endoplasmic reticulum upon PRR stimulation of macrophages and associates with endoplasmic reticulum-stress sensors, promoting the endoplasmic reticulum unfolded protein response (UPR). Does not show laccase activity. This chain is Purine nucleoside phosphorylase LACC1, found in Mus musculus (Mouse).